Reading from the N-terminus, the 341-residue chain is UDP-N-acetylenolpyruvoylglucosamine reductase (341 aa).

In terms of domain architecture, FAD-binding PCMH-type spans 13-185; sequence FGVEQSCLSM…TAVGLRLPKA (173 aa). Residue R161 is part of the active site. The Proton donor role is filled by S231. The active site involves E327.

The protein belongs to the MurB family. It depends on FAD as a cofactor.

Its subcellular location is the cytoplasm. It carries out the reaction UDP-N-acetyl-alpha-D-muramate + NADP(+) = UDP-N-acetyl-3-O-(1-carboxyvinyl)-alpha-D-glucosamine + NADPH + H(+). Its pathway is cell wall biogenesis; peptidoglycan biosynthesis. In terms of biological role, cell wall formation. The sequence is that of UDP-N-acetylenolpyruvoylglucosamine reductase from Shewanella sp. (strain MR-4).